Consider the following 83-residue polypeptide: Toxin TdNa5 (83 aa).

Residues 1–20 form the signal peptide; the sequence is MKTIIFFIACLMLIDVVVES. One can recognise an LCN-type CS-alpha/beta domain in the interval 21–82; the sequence is KDGYIIEHRG…IFDSNNNKCG (62 aa). Cystine bridges form between C31/C81, C35/C57, C43/C62, and C47/C64. C81 bears the Cysteine amide mark.

This sequence belongs to the long (4 C-C) scorpion toxin superfamily. Sodium channel inhibitor family. Beta subfamily. As to expression, expressed by the venom gland.

The protein resides in the secreted. Inhibits the sodium currents (Nav) in an apparent irreversible manner. Produces small depolarization and induces repetitive firing in squid axons. Is specific for arthropods (crickets, triatomides, crabs and squids), but is non-toxic to mice. Shows antibacterial activity against both Gram-positive and Gram-negative bacteria. The polypeptide is Toxin TdNa5 (Tityus discrepans (Venezuelan scorpion)).